A 304-amino-acid polypeptide reads, in one-letter code: N-acetylmuramic acid 6-phosphate etherase (304 aa).

Residues 62–225 enclose the SIS domain; that stretch reads IVQAFQNGGR…TTASMVMIGK (164 aa). The active-site Proton donor is the glutamate 90. Glutamate 121 is a catalytic residue.

The protein belongs to the GCKR-like family. MurNAc-6-P etherase subfamily. Homodimer.

The enzyme catalyses N-acetyl-D-muramate 6-phosphate + H2O = N-acetyl-D-glucosamine 6-phosphate + (R)-lactate. The protein operates within amino-sugar metabolism; 1,6-anhydro-N-acetylmuramate degradation. Its pathway is amino-sugar metabolism; N-acetylmuramate degradation. It participates in cell wall biogenesis; peptidoglycan recycling. In terms of biological role, specifically catalyzes the cleavage of the D-lactyl ether substituent of MurNAc 6-phosphate, producing GlcNAc 6-phosphate and D-lactate. Together with AnmK, is also required for the utilization of anhydro-N-acetylmuramic acid (anhMurNAc) either imported from the medium or derived from its own cell wall murein, and thus plays a role in cell wall recycling. This chain is N-acetylmuramic acid 6-phosphate etherase, found in Actinobacillus pleuropneumoniae serotype 7 (strain AP76).